The chain runs to 679 residues: Glycine--tRNA ligase beta subunit (679 aa).

Belongs to the class-II aminoacyl-tRNA synthetase family. As to quaternary structure, tetramer of two alpha and two beta subunits.

It localises to the cytoplasm. The catalysed reaction is tRNA(Gly) + glycine + ATP = glycyl-tRNA(Gly) + AMP + diphosphate. The chain is Glycine--tRNA ligase beta subunit from Streptococcus pyogenes serotype M4 (strain MGAS10750).